Reading from the N-terminus, the 414-residue chain is Adenylosuccinate synthetase (414 aa).

Residues 12–18 and 40–42 contribute to the GTP site; these read GDEGKGK and GHT. Aspartate 13 (proton acceptor) is an active-site residue. Mg(2+)-binding residues include aspartate 13 and glycine 40. Residues 13-16, 38-41, threonine 124, arginine 138, glutamine 216, threonine 231, and arginine 297 each bind IMP; these read DEGK and NAGH. The active-site Proton donor is the histidine 41. 293-299 contacts substrate; sequence STTGRPR. Residues arginine 299, 325–327, and 403–405 contribute to the GTP site; these read KLD and STG.

Belongs to the adenylosuccinate synthetase family. In terms of assembly, homodimer. Mg(2+) serves as cofactor.

Its subcellular location is the cytoplasm. The enzyme catalyses IMP + L-aspartate + GTP = N(6)-(1,2-dicarboxyethyl)-AMP + GDP + phosphate + 2 H(+). Its pathway is purine metabolism; AMP biosynthesis via de novo pathway; AMP from IMP: step 1/2. In terms of biological role, plays an important role in the de novo pathway of purine nucleotide biosynthesis. Catalyzes the first committed step in the biosynthesis of AMP from IMP. The chain is Adenylosuccinate synthetase from Hydrogenobaculum sp. (strain Y04AAS1).